Reading from the N-terminus, the 426-residue chain is Putative 3-oxoacyl-[acyl-carrier-protein] synthase, mitochondrial (426 aa).

The N-terminal 18 residues, 1 to 18, are a transit peptide targeting the mitochondrion; that stretch reads MKRVVITGLGAVTPLGNG. Positions 19-423 constitute a Ketosynthase family 3 (KS3) domain; sequence VKTNWRNLIQ…GTNASLCFKK (405 aa). Residues cysteine 170, histidine 311, and histidine 351 each act as for beta-ketoacyl synthase activity in the active site.

The protein belongs to the thiolase-like superfamily. Beta-ketoacyl-ACP synthases family.

The protein localises to the mitochondrion. It catalyses the reaction a fatty acyl-[ACP] + malonyl-[ACP] + H(+) = a 3-oxoacyl-[ACP] + holo-[ACP] + CO2. The catalysed reaction is butanoyl-[ACP] + malonyl-[ACP] + H(+) = 3-oxohexanoyl-[ACP] + holo-[ACP] + CO2. It carries out the reaction hexanoyl-[ACP] + malonyl-[ACP] + H(+) = 3-oxooctanoyl-[ACP] + holo-[ACP] + CO2. The enzyme catalyses octanoyl-[ACP] + malonyl-[ACP] + H(+) = 3-oxodecanoyl-[ACP] + holo-[ACP] + CO2. It catalyses the reaction decanoyl-[ACP] + malonyl-[ACP] + H(+) = 3-oxododecanoyl-[ACP] + holo-[ACP] + CO2. The catalysed reaction is dodecanoyl-[ACP] + malonyl-[ACP] + H(+) = 3-oxotetradecanoyl-[ACP] + holo-[ACP] + CO2. It carries out the reaction tetradecanoyl-[ACP] + malonyl-[ACP] + H(+) = 3-oxohexadecanoyl-[ACP] + holo-[ACP] + CO2. It participates in lipid metabolism; fatty acid biosynthesis. Its function is as follows. May play a role in the biosynthesis of lipoic acid as well as longer chain fatty acids required for optimal mitochondrial function. This chain is Putative 3-oxoacyl-[acyl-carrier-protein] synthase, mitochondrial, found in Schizosaccharomyces pombe (strain 972 / ATCC 24843) (Fission yeast).